The sequence spans 571 residues: Putative diflavin flavoprotein A 1 (571 aa).

The interval 43–236 is zinc metallo-hydrolase; it reads ENGTTYNSFL…PPVQLVATGH (194 aa). Fe cation is bound by residues H92, E94, D96, H159, D178, and H236. The Flavodoxin-like domain maps to 265–426; it reads VAIFYAANYG…DLDKALGRLS (162 aa). The interval 427–571 is flavodoxin-reductase-like; the sequence is GGLYIITAQK…VHHRKVGNHY (145 aa).

It in the N-terminal section; belongs to the zinc metallo-hydrolase group 3 family. In the C-terminal section; belongs to the flavodoxin reductase family. It depends on Fe cation as a cofactor.

Functionally, mediates electron transfer from NADH to oxygen, reducing it to water. This modular protein has 3 redox cofactors, in other organisms the same activity requires 2 or 3 proteins. This is Putative diflavin flavoprotein A 1 (dfa1) from Thermosynechococcus vestitus (strain NIES-2133 / IAM M-273 / BP-1).